Here is a 484-residue protein sequence, read N- to C-terminus: tRNA sulfurtransferase (484 aa).

Positions 63–167 constitute a THUMP domain; it reads REMIERLCCT…DQRLFVVHRQ (105 aa). Residues 185 to 186, K267, G289, and Q298 each bind ATP; that span reads LM. C346 and C457 are disulfide-bonded. The region spanning 405–483 is the Rhodanese domain; sequence ALAGQIVLDI…GHANVRVYRP (79 aa). Catalysis depends on C457, which acts as the Cysteine persulfide intermediate.

The protein belongs to the ThiI family.

Its subcellular location is the cytoplasm. It carries out the reaction [ThiI sulfur-carrier protein]-S-sulfanyl-L-cysteine + a uridine in tRNA + 2 reduced [2Fe-2S]-[ferredoxin] + ATP + H(+) = [ThiI sulfur-carrier protein]-L-cysteine + a 4-thiouridine in tRNA + 2 oxidized [2Fe-2S]-[ferredoxin] + AMP + diphosphate. The catalysed reaction is [ThiS sulfur-carrier protein]-C-terminal Gly-Gly-AMP + S-sulfanyl-L-cysteinyl-[cysteine desulfurase] + AH2 = [ThiS sulfur-carrier protein]-C-terminal-Gly-aminoethanethioate + L-cysteinyl-[cysteine desulfurase] + A + AMP + 2 H(+). It functions in the pathway cofactor biosynthesis; thiamine diphosphate biosynthesis. Catalyzes the ATP-dependent transfer of a sulfur to tRNA to produce 4-thiouridine in position 8 of tRNAs, which functions as a near-UV photosensor. Also catalyzes the transfer of sulfur to the sulfur carrier protein ThiS, forming ThiS-thiocarboxylate. This is a step in the synthesis of thiazole, in the thiamine biosynthesis pathway. The sulfur is donated as persulfide by IscS. The polypeptide is tRNA sulfurtransferase (Azotobacter vinelandii (strain DJ / ATCC BAA-1303)).